We begin with the raw amino-acid sequence, 375 residues long: FAD-dependent catabolic D-arginine dehydrogenase DauA (375 aa).

FAD-binding positions include Ala14, 32-33, 41-48, Ala171, and 331-336; these read ER, STGRSAAH, and GGYGIQ.

Belongs to the FAD-dependent glycerol-3-phosphate dehydrogenase family. In terms of assembly, monomer. Requires FAD as cofactor.

It carries out the reaction D-arginine + A + H2O = 5-guanidino-2-oxopentanoate + AH2 + NH4(+). It catalyses the reaction a D-alpha-amino acid + A + H2O = a 2-oxocarboxylate + AH2 + NH4(+). Its activity is regulated as follows. Inhibited by D-arginine and D-lysine at high concentration. DauA is highly expressed within the cystic fibrosis (CF) lung, and it is required for virulence via the optimal production of hydrogen cyanide, pyocyanine, pyoverdine, rhamnolipid and alginate during biofilm formation. Involved in the catabolism of D-lysine and D-arginine. Under aerobic conditions, the arginine succinyltransferase (AST) and arginine transaminase (ATA) pathways are 2 major routes for L-arginine utilization as the sole source of carbon and nitrogen. The D-to-L racemization of arginine by DauA and DauB is necessary, before to be channeled into the AST and/or ATA pathways. DauA catalyzes the flavin-dependent oxidative deamination of D-arginine into 2-ketoarginine (2-KA) and ammonia. It also has dehydrogenase activity towards D-lysine, D-tyrosine, D-methionine, D-phenylalanine, D-ornithine, D-histidine and D-leucine as substrates. This is FAD-dependent catabolic D-arginine dehydrogenase DauA from Pseudomonas aeruginosa (strain ATCC 15692 / DSM 22644 / CIP 104116 / JCM 14847 / LMG 12228 / 1C / PRS 101 / PAO1).